The primary structure comprises 176 residues: ATP synthase subunit b (176 aa).

A helical transmembrane segment spans residues 18-38 (GVEWGTVIVTVITFAILLALL).

It belongs to the ATPase B chain family. F-type ATPases have 2 components, F(1) - the catalytic core - and F(0) - the membrane proton channel. F(1) has five subunits: alpha(3), beta(3), gamma(1), delta(1), epsilon(1). F(0) has three main subunits: a(1), b(2) and c(10-14). The alpha and beta chains form an alternating ring which encloses part of the gamma chain. F(1) is attached to F(0) by a central stalk formed by the gamma and epsilon chains, while a peripheral stalk is formed by the delta and b chains.

The protein localises to the cell membrane. Functionally, f(1)F(0) ATP synthase produces ATP from ADP in the presence of a proton or sodium gradient. F-type ATPases consist of two structural domains, F(1) containing the extramembraneous catalytic core and F(0) containing the membrane proton channel, linked together by a central stalk and a peripheral stalk. During catalysis, ATP synthesis in the catalytic domain of F(1) is coupled via a rotary mechanism of the central stalk subunits to proton translocation. In terms of biological role, component of the F(0) channel, it forms part of the peripheral stalk, linking F(1) to F(0). This Staphylococcus haemolyticus (strain JCSC1435) protein is ATP synthase subunit b.